A 371-amino-acid chain; its full sequence is Mitogen-activated protein kinase homolog MMK2 (371 aa).

The region spanning 37–323 (VPPIRSVGRG…VDEALCHPYM (287 aa)) is the Protein kinase domain. ATP contacts are provided by residues 43-51 (VGRGAYGIV) and K66. D163 (proton acceptor) is an active-site residue. A Phosphothreonine modification is found at T195. A TXY motif is present at residues 195–197 (TEY). Y197 carries the phosphotyrosine modification.

This sequence belongs to the protein kinase superfamily. CMGC Ser/Thr protein kinase family. MAP kinase subfamily. The cofactor is Mg(2+). In terms of processing, dually phosphorylated on Thr-195 and Tyr-197, which activates the enzyme. Autophosphorylated.

The enzyme catalyses L-seryl-[protein] + ATP = O-phospho-L-seryl-[protein] + ADP + H(+). The catalysed reaction is L-threonyl-[protein] + ATP = O-phospho-L-threonyl-[protein] + ADP + H(+). Its activity is regulated as follows. Activated by tyrosine and threonine phosphorylation. The protein is Mitogen-activated protein kinase homolog MMK2 (MMK2) of Medicago sativa (Alfalfa).